A 943-amino-acid chain; its full sequence is Serine/threonine-protein kinase ATG1 (943 aa).

A Protein kinase domain is found at 22–327; it reads FVIDKEIGKG…FEDFFHHPVI (306 aa). Residues 28 to 36 and Lys-51 each bind ATP; that span reads IGKGSFAQV. The active-site Proton acceptor is Asp-165. Disordered stretches follow at residues 334–468, 503–561, 774–800, 858–888, and 914–943; these read LVED…LTDE, QQGQ…SPGA, LPEEHPSHPSNRPPETSALGGSSGGQA, HLPKRRVSTSSKEEQSVAAQDASDDMSSDDK, and AASKAQQQQQQQQVVVRRRSGDVTPRSVPT. The segment covering 338–352 has biased composition (basic and acidic residues); the sequence is DIPKPEKPVLAETKS. The span at 517–529 shows a compositional bias: polar residues; sequence ATQQGHPTSTTGA. Residues 542-554 show a composition bias toward basic and acidic residues; the sequence is RNDHYRKASHDKT. Residues 919-928 show a composition bias toward low complexity; it reads QQQQQQQQVV.

Belongs to the protein kinase superfamily. Ser/Thr protein kinase family. APG1/unc-51/ULK1 subfamily. In terms of assembly, homodimer. Forms a ternary complex with ATG13 and ATG17.

It localises to the cytoplasm. The protein localises to the preautophagosomal structure membrane. It carries out the reaction L-seryl-[protein] + ATP = O-phospho-L-seryl-[protein] + ADP + H(+). The enzyme catalyses L-threonyl-[protein] + ATP = O-phospho-L-threonyl-[protein] + ADP + H(+). Functionally, serine/threonine protein kinase involved in the cytoplasm to vacuole transport (Cvt) and found to be essential in autophagy, where it is required for the formation of autophagosomes. Involved in the clearance of protein aggregates which cannot be efficiently cleared by the proteasome. Required for selective autophagic degradation of the nucleus (nucleophagy) as well as for mitophagy which contributes to regulate mitochondrial quantity and quality by eliminating the mitochondria to a basal level to fulfill cellular energy requirements and preventing excess ROS production. Also involved in endoplasmic reticulum-specific autophagic process, in selective removal of ER-associated degradation (ERAD) substrates. Plays a key role in ATG9 and ATG23 cycling through the pre-autophagosomal structure and is necessary to promote ATG18 binding to ATG9 through phosphorylation of ATG9. Catalyzes phosphorylation of ATG4, decreasing the interaction between ATG4 and ATG8 and impairing deconjugation of PE-conjugated forms of ATG8. This Chaetomium globosum (strain ATCC 6205 / CBS 148.51 / DSM 1962 / NBRC 6347 / NRRL 1970) (Soil fungus) protein is Serine/threonine-protein kinase ATG1.